A 400-amino-acid polypeptide reads, in one-letter code: Formate-dependent phosphoribosylglycinamide formyltransferase (400 aa).

N(1)-(5-phospho-beta-D-ribosyl)glycinamide contacts are provided by residues 22–23 (EL) and glutamate 82. Residues arginine 115, lysine 157, 162-167 (SSGKGQ), 197-200 (EGFI), and glutamate 205 each bind ATP. Positions 120-315 (RLAAETLGVP…EFELHARAIL (196 aa)) constitute an ATP-grasp domain. Glutamate 274 and glutamate 286 together coordinate Mg(2+). N(1)-(5-phospho-beta-D-ribosyl)glycinamide is bound by residues aspartate 293, lysine 362, and 369–370 (RR).

It belongs to the PurK/PurT family. In terms of assembly, homodimer.

It carries out the reaction N(1)-(5-phospho-beta-D-ribosyl)glycinamide + formate + ATP = N(2)-formyl-N(1)-(5-phospho-beta-D-ribosyl)glycinamide + ADP + phosphate + H(+). It functions in the pathway purine metabolism; IMP biosynthesis via de novo pathway; N(2)-formyl-N(1)-(5-phospho-D-ribosyl)glycinamide from N(1)-(5-phospho-D-ribosyl)glycinamide (formate route): step 1/1. Functionally, involved in the de novo purine biosynthesis. Catalyzes the transfer of formate to 5-phospho-ribosyl-glycinamide (GAR), producing 5-phospho-ribosyl-N-formylglycinamide (FGAR). Formate is provided by PurU via hydrolysis of 10-formyl-tetrahydrofolate. The protein is Formate-dependent phosphoribosylglycinamide formyltransferase of Variovorax paradoxus (strain S110).